A 66-amino-acid polypeptide reads, in one-letter code: MAICYARFMVPEPSIFEIDAEAEEAADAEGMADIAAGRVVPHEEVSAWLDTWGTPEEKPAPETWRK.

Functionally, antitoxin component of a type II toxin-antitoxin (TA) system. Neutralizes the effect of cognate toxin RelE2, but no other RelE or ParE toxin. The chain is Antitoxin RelB2 (relB2) from Caulobacter vibrioides (strain ATCC 19089 / CIP 103742 / CB 15) (Caulobacter crescentus).